The following is a 398-amino-acid chain: Chorismate synthase (398 aa).

NADP(+)-binding residues include R44 and R50. FMN contacts are provided by residues 133–135, 261–262, G306, 321–325, and R347; these read RAS, QA, and KPIPT.

It belongs to the chorismate synthase family. Homotetramer. Requires FMNH2 as cofactor.

It carries out the reaction 5-O-(1-carboxyvinyl)-3-phosphoshikimate = chorismate + phosphate. It functions in the pathway metabolic intermediate biosynthesis; chorismate biosynthesis; chorismate from D-erythrose 4-phosphate and phosphoenolpyruvate: step 7/7. Catalyzes the anti-1,4-elimination of the C-3 phosphate and the C-6 proR hydrogen from 5-enolpyruvylshikimate-3-phosphate (EPSP) to yield chorismate, which is the branch point compound that serves as the starting substrate for the three terminal pathways of aromatic amino acid biosynthesis. This reaction introduces a second double bond into the aromatic ring system. The polypeptide is Chorismate synthase (Aquifex aeolicus (strain VF5)).